Reading from the N-terminus, the 1128-residue chain is DNA-directed RNA polymerase subunit Rpo2 (1128 aa).

DsDNA is bound by residues Lys178, 181 to 182 (SN), Lys206, 435 to 439 (RGQPN), and 1027 to 1032 (RFGEME). Residues Cys1061, Cys1064, Cys1079, and His1082 each contribute to the Zn(2+) site.

It belongs to the RNA polymerase beta chain family. Part of the 13-subunit RNA polymerase complex. Zn(2+) serves as cofactor.

It is found in the cytoplasm. It catalyses the reaction RNA(n) + a ribonucleoside 5'-triphosphate = RNA(n+1) + diphosphate. Functionally, DNA-dependent RNA polymerase (RNAP) catalyzes the transcription of DNA into RNA using the four ribonucleoside triphosphates as substrates. This subunit is involved in DNA promoter recognition. The protein is DNA-directed RNA polymerase subunit Rpo2 of Saccharolobus shibatae (strain ATCC 51178 / DSM 5389 / JCM 8931 / NBRC 15437 / B12) (Sulfolobus shibatae).